The sequence spans 411 residues: Glutamate dehydrogenase 3, mitochondrial (411 aa).

The N-terminal 18 residues, 1 to 18, are a transit peptide targeting the mitochondrion; that stretch reads MNALAATSRNFRQAARLL. The active site involves Lys102.

The protein belongs to the Glu/Leu/Phe/Val dehydrogenases family. As to expression, barely expressed in leaves, spikelets and roots. Glumes and stamens specific accumulation.

The protein resides in the mitochondrion. It catalyses the reaction L-glutamate + NAD(+) + H2O = 2-oxoglutarate + NH4(+) + NADH + H(+). The enzyme catalyses L-glutamate + NADP(+) + H2O = 2-oxoglutarate + NH4(+) + NADPH + H(+). The polypeptide is Glutamate dehydrogenase 3, mitochondrial (GDH3) (Oryza sativa subsp. japonica (Rice)).